The sequence spans 362 residues: 2-aminoethylphosphonate--pyruvate transaminase (362 aa).

At lysine 193 the chain carries N6-(pyridoxal phosphate)lysine.

Belongs to the class-V pyridoxal-phosphate-dependent aminotransferase family. PhnW subfamily. As to quaternary structure, homodimer. Requires pyridoxal 5'-phosphate as cofactor.

It carries out the reaction (2-aminoethyl)phosphonate + pyruvate = phosphonoacetaldehyde + L-alanine. In terms of biological role, involved in phosphonate degradation. In Phocaeicola vulgatus (strain ATCC 8482 / DSM 1447 / JCM 5826 / CCUG 4940 / NBRC 14291 / NCTC 11154) (Bacteroides vulgatus), this protein is 2-aminoethylphosphonate--pyruvate transaminase.